We begin with the raw amino-acid sequence, 299 residues long: Methylsterol monooxygenase 1-2 (299 aa).

3 consecutive transmembrane segments (helical) span residues 39–59 (CHNI…LVFI), 96–116 (FILV…MIEI), and 118–138 (SGLP…YFLV). A Fatty acid hydroxylase domain is found at 132–267 (LVVYFLVEDY…FTYCDYIYGT (136 aa)). The Histidine box-1 motif lies at 147–151 (HRFFH). Positions 160-164 (HHIHH) match the Histidine box-2 motif. The helical transmembrane segment at 189-209 (TFLGPAIAPGHMITFWLWIAL) threads the bilayer. The Histidine box-3 signature appears at 239–245 (YHDYHHY).

This sequence belongs to the sterol desaturase family. As to quaternary structure, interacts with ACBP1. Fe cation is required as a cofactor. In terms of tissue distribution, expressed in embryo sacs, pollen and trichomes. Observed in leaves, roots, siliques and flowers.

The protein localises to the endoplasmic reticulum membrane. It catalyses the reaction 4,4-dimethyl-5alpha-cholest-7-en-3beta-ol + 6 Fe(II)-[cytochrome b5] + 3 O2 + 5 H(+) = 4alpha-carboxy-4beta-methyl-5alpha-cholest-7-ene-3beta-ol + 6 Fe(III)-[cytochrome b5] + 4 H2O. It carries out the reaction 24-methylenecycloartanol + 6 Fe(II)-[cytochrome b5] + 3 O2 + 5 H(+) = 4alpha-carboxy-4beta,14alpha-dimethyl-9beta,19-cyclo-5alpha-ergost-24(24(1))-en-3beta-ol + 6 Fe(III)-[cytochrome b5] + 4 H2O. Its function is as follows. Non-heme iron oxygenase involved in sterols biosynthesis by catalyzing the removal of the first methyl group at the C-4 position. 4,4-dimethyl-9-beta,19-cyclopropylsterols such as 24-methylenecycloartanol are the preferred substrates. Acts as a rate-limiting enzyme in the sterol pathway via interaction with ACBP1; sterols serve as lipid modulators for gene expression of homeodomain-leucine zipper IV transcription factors. Together with SMO1-1, involved in the maintenance of sterol composition to balance auxin and cytokinin activities during embryogenesis. The chain is Methylsterol monooxygenase 1-2 from Arabidopsis thaliana (Mouse-ear cress).